The chain runs to 67 residues: Protein AaeX (67 aa).

The next 2 membrane-spanning stretches (helical) occupy residues 3–23 and 43–63; these read LFPVIVIFGLSFPPIFFELLL and FVWHPALFNTALYCCLFYLLS.

The protein belongs to the AaeX family.

The protein resides in the cell membrane. This chain is Protein AaeX, found in Cronobacter sakazakii (strain ATCC BAA-894) (Enterobacter sakazakii).